A 46-amino-acid polypeptide reads, in one-letter code: MKVLSSLASAKTRYPDCQVVRRRGRVYVICKSNPRFKAVQGRKKRR.

The protein belongs to the bacterial ribosomal protein bL36 family.

This chain is Large ribosomal subunit protein bL36A, found in Sodalis glossinidius (strain morsitans).